The following is a 164-amino-acid chain: Large ribosomal subunit protein uL23 (164 aa).

The segment at 1 to 41 (MPAKAASAAASKKNSAPKSAVSKKVAKKGAPAAAAKPTKVV) is disordered.

This sequence belongs to the universal ribosomal protein uL23 family.

Functionally, this protein binds to a specific region on the 26S rRNA. The sequence is that of Large ribosomal subunit protein uL23 (RPL23A) from Trypanosoma brucei brucei.